The chain runs to 314 residues: Curved DNA-binding protein (314 aa).

The 65-residue stretch at 5-69 (DYYKILDVEP…EKRAEYDELR (65 aa)) folds into the J domain. Residues 73–92 (RQGRPFQTPPGWQSRAGAGA) are disordered.

Its subcellular location is the cytoplasm. The protein resides in the nucleoid. Its function is as follows. DNA-binding protein that preferentially recognizes a curved DNA sequence. It is probably a functional analog of DnaJ; displays overlapping activities with DnaJ, but functions under different conditions, probably acting as a molecular chaperone in an adaptive response to environmental stresses other than heat shock. Lacks autonomous chaperone activity; binds native substrates and targets them for recognition by DnaK. Its activity is inhibited by the binding of CbpM. This is Curved DNA-binding protein from Pseudomonas syringae pv. tomato (strain ATCC BAA-871 / DC3000).